The sequence spans 384 residues: Urotensin-2 receptor (384 aa).

At 1 to 54 the chain is on the extracellular side; sequence MALSPEPSSRFLVPATMGSAMPELPGAPNASLNSSLASPTEPNSLEDLVATGTI. N-linked (GlcNAc...) asparagine glycans are attached at residues N29 and N33. Residues 55–77 traverse the membrane as a helical segment; sequence GVVLSAMGVVGMAGNVYTLTVMC. Over 78 to 87 the chain is Cytoplasmic; that stretch reads RFLHTSASMY. The helical transmembrane segment at 88–113 threads the bilayer; sequence VYVINLALADLLYLLSIPFIVATYVT. The Extracellular portion of the chain corresponds to 114-124; sequence KRWHFGDVGCR. C123 and C199 are disulfide-bonded. The chain crosses the membrane as a helical span at residues 125–146; it reads VLFSLDFLTMHASIFTLTLMSR. The Cytoplasmic portion of the chain corresponds to 147-167; that stretch reads ERYAAVVRPLDTVQRSKGYRK. A helical transmembrane segment spans residues 168–186; the sequence is VLALGTWLLALLLALPMML. The Extracellular portion of the chain corresponds to 187 to 209; it reads AIRLVRRGHKSLCLPAWGQRTHR. A helical transmembrane segment spans residues 210-232; the sequence is AYLTLLFGTSIVGPGVVIGLLYV. Residues 233-259 are Cytoplasmic-facing; sequence RLARAYWLSQRSSFTQTRRLPNPRVLY. The helical transmembrane segment at 260-285 threads the bilayer; sequence LILGIVLLFWACFLPFWLWQLLAQYR. Over 286–299 the chain is Extracellular; it reads GAPPLAPRSARIVN. A helical membrane pass occupies residues 300-320; sequence YLTTCLTYGNSCVNPFLYTLL. The Cytoplasmic segment spans residues 321–384; that stretch reads TKNYRDYRQR…SQAVPGSLCV (64 aa).

The protein belongs to the G-protein coupled receptor 1 family. Expressed in neural tissue, including sensory epithelia.

It localises to the cell membrane. Its function is as follows. High affinity receptor for urotensin-2 and urotensin-2B. The activity of this receptor is mediated by a G-protein that activate a phosphatidylinositol-calcium second messenger system. In Bos taurus (Bovine), this protein is Urotensin-2 receptor (UTS2R).